The primary structure comprises 472 residues: MSSSKNSLANKAQAWSARFTEPVDELVQRYTASIGFDQRFAMVDIAGSLAHAEMLATQKIISAQDLADIQKGMAQIKSEIEAGQFEWQLALEDVHLNIEARLTQLVGDAGKRLHTGRSRNDQVATDLRLWLRASVDDISVTLKSLRIALLDLAEKHASTIMPGHTHLQVAQPITFGHHLMAYYEMFSRDASRLVDLRARFNRLPLGAAALAGTTYPIDREQVARILGFDGICNNSLDAVSDRDFAIEFCAFSSILMMHVSRLSEELVLWLSPRFGFIDLPDRFCTGSSIMPQKKNPDVPELARGKTGRVYGDLISLLTLMKSQPLAYNKDNQEDKEPLFDAVDTVQDTLRIFADMVPHIEVKAEVMKAAAEEGFATATDLADYLVKKGLAFRDAHEAVAHAVKACVGRNCMLTDLSLAELRFACGLDNRPELMSDDVFALLTVDGSVQSRQHAGGTAPAQVLAAIKRARTDL.

This sequence belongs to the lyase 1 family. Argininosuccinate lyase subfamily.

It localises to the cytoplasm. The catalysed reaction is 2-(N(omega)-L-arginino)succinate = fumarate + L-arginine. It participates in amino-acid biosynthesis; L-arginine biosynthesis; L-arginine from L-ornithine and carbamoyl phosphate: step 3/3. This chain is Argininosuccinate lyase, found in Polynucleobacter asymbioticus (strain DSM 18221 / CIP 109841 / QLW-P1DMWA-1) (Polynucleobacter necessarius subsp. asymbioticus).